The sequence spans 312 residues: Malate dehydrogenase (312 aa).

NAD(+) contacts are provided by residues Gly-7 to Gly-13 and Asp-34. Substrate-binding residues include Arg-81 and Arg-87. NAD(+) is bound by residues Asn-94 and Ile-117 to Asn-119. Residues Asn-119 and Arg-153 each coordinate substrate. The active-site Proton acceptor is His-177. Met-227 provides a ligand contact to NAD(+).

The protein belongs to the LDH/MDH superfamily. MDH type 1 family. As to quaternary structure, homodimer.

It carries out the reaction (S)-malate + NAD(+) = oxaloacetate + NADH + H(+). In terms of biological role, catalyzes the reversible oxidation of malate to oxaloacetate. The sequence is that of Malate dehydrogenase from Shigella dysenteriae serotype 1 (strain Sd197).